The following is a 537-amino-acid chain: Multidrug resistance protein Stp (537 aa).

A run of 14 helical transmembrane segments spans residues 6–26 (LLTL…ALIV), 46–66 (WVVA…ATLA), 77–97 (IGVS…SIAV), 104–124 (AQGL…SAAF), 136–156 (IWTA…GLLV), 163–183 (SIFY…LCYV), 200–220 (LLFI…PQIG), 223–243 (SVQT…FVWL), 262–282 (YALA…MLLL), 300–320 (LMIL…GHLV), 327–347 (VPIL…IFSE), 352–372 (ALVL…LTPI), 397–417 (AIGS…WLSA), and 478–498 (VALL…WRWF).

The protein belongs to the major facilitator superfamily. EmrB family.

It is found in the cell membrane. Contributes to spectinomycin and tetracycline resistance. The chain is Multidrug resistance protein Stp (stp) from Mycobacterium tuberculosis (strain ATCC 25618 / H37Rv).